We begin with the raw amino-acid sequence, 556 residues long: Formate--tetrahydrofolate ligase (556 aa).

ATP is bound at residue threonine 65–threonine 72.

This sequence belongs to the formate--tetrahydrofolate ligase family.

The enzyme catalyses (6S)-5,6,7,8-tetrahydrofolate + formate + ATP = (6R)-10-formyltetrahydrofolate + ADP + phosphate. Its pathway is one-carbon metabolism; tetrahydrofolate interconversion. The chain is Formate--tetrahydrofolate ligase from Symbiobacterium thermophilum (strain DSM 24528 / JCM 14929 / IAM 14863 / T).